The sequence spans 845 residues: Putative DEAD-box ATP-dependent RNA helicase 29 (845 aa).

The short motif at 28–56 is the Q motif element; the sequence is GGFESLNLGPNVFNAIKKKGYKVPTPIQR. Positions 59-232 constitute a Helicase ATP-binding domain; the sequence is MPLILSGVDV…KAGLREPQLV (174 aa). 72-79 is an ATP binding site; the sequence is ARTGSGKT. The DEAD box motif lies at 180–183; sequence DEAD. The Helicase C-terminal domain maps to 256–411; sequence KYSALLYLVR…EVLKNMEEVM (156 aa). Positions 675–845 are disordered; that stretch reads SGKIKTESGA…GGGGKRGRGR (171 aa). Composition is skewed to basic and acidic residues over residues 696–716 and 738–754; these read RWQERSHKKVSRDSGDADETT and VRSEIKDLDQVRKERQQ. The span at 770-799 shows a compositional bias: gly residues; that stretch reads GGRGGARGGRGGGARGGRGGSRDFGGGGRD. The span at 806–817 shows a compositional bias: basic and acidic residues; sequence RGGRSGGRDFGG. Residues 828–845 are compositionally biased toward basic residues; the sequence is GGKRGGGRGGGGKRGRGR.

The protein belongs to the DEAD box helicase family. DDX54/DBP10 subfamily.

The catalysed reaction is ATP + H2O = ADP + phosphate + H(+). In Arabidopsis thaliana (Mouse-ear cress), this protein is Putative DEAD-box ATP-dependent RNA helicase 29 (RH29).